Consider the following 334-residue polypeptide: MGNEFDKILKIIQKDIPLVKEPFSVLAQEVGIEEGKLLKTIEKLVEDGIVRHIAPIYDSRLLGYDSALIAFKVDRQKLEEVANFVNACPGVSHNYERTHDFNLWFTLAVPPEISELEDVVRLMAERERVKDYLVLRVVRLFKIGVKLDYESPAEKESVDTKVYTYTPLTEEEKRIVSITQGSFPLVERPFLEYAKRLRMSEEELLEKLSALKERGVLRRISAVLYHRRAGYVANAMSVWEVPEDAIEEVGRYIAGFKGVSHCYQRTTSEKFRYNLFAMMHGKGQEEIKLLAETISREKALSKYALLFSTREFKKVRIKYFSEEFERWFKELISA.

His93 is an active-site residue.

This sequence belongs to the Ahb/Nir family.

The enzyme catalyses siroheme + 2 H(+) = 12,18-didecarboxysiroheme + 2 CO2. Its pathway is porphyrin-containing compound metabolism. Its function is as follows. Involved in heme d1 biosynthesis. Catalyzes the decarboxylation of siroheme into didecarboxysiroheme. Siroheme is probably decarboxylated to monodecarboxysiroheme, which is in turn decarboxylated to didecarboxysiroheme. In Hydrogenobacter thermophilus (strain DSM 6534 / IAM 12695 / TK-6), this protein is Siroheme decarboxylase.